Here is a 169-residue protein sequence, read N- to C-terminus: Crossover junction endodeoxyribonuclease RuvC (169 aa).

Active-site residues include aspartate 11, glutamate 71, and histidine 143. Aspartate 11, glutamate 71, and histidine 143 together coordinate Mg(2+).

The protein belongs to the RuvC family. As to quaternary structure, homodimer which binds Holliday junction (HJ) DNA. The HJ becomes 2-fold symmetrical on binding to RuvC with unstacked arms; it has a different conformation from HJ DNA in complex with RuvA. In the full resolvosome a probable DNA-RuvA(4)-RuvB(12)-RuvC(2) complex forms which resolves the HJ. Mg(2+) serves as cofactor.

It localises to the cytoplasm. The catalysed reaction is Endonucleolytic cleavage at a junction such as a reciprocal single-stranded crossover between two homologous DNA duplexes (Holliday junction).. The RuvA-RuvB-RuvC complex processes Holliday junction (HJ) DNA during genetic recombination and DNA repair. Endonuclease that resolves HJ intermediates. Cleaves cruciform DNA by making single-stranded nicks across the HJ at symmetrical positions within the homologous arms, yielding a 5'-phosphate and a 3'-hydroxyl group; requires a central core of homology in the junction. The consensus cleavage sequence is 5'-(A/T)TT(C/G)-3'. Cleavage occurs on the 3'-side of the TT dinucleotide at the point of strand exchange. HJ branch migration catalyzed by RuvA-RuvB allows RuvC to scan DNA until it finds its consensus sequence, where it cleaves and resolves the cruciform DNA. This is Crossover junction endodeoxyribonuclease RuvC from Mesorhizobium japonicum (strain LMG 29417 / CECT 9101 / MAFF 303099) (Mesorhizobium loti (strain MAFF 303099)).